A 510-amino-acid chain; its full sequence is Chromosomal replication initiator protein DnaA (510 aa).

The domain I, interacts with DnaA modulators stretch occupies residues 1 to 107 (MTNDPGSGFA…VRIAPPPADD (107 aa)). The segment at 107-169 (DDDDSVAAAV…ADTSASADGT (63 aa)) is domain II. The segment at 119–168 (PGLEASPETSQEVSDEIDDFGENAPKSRQSWPTHFKKRSTDADTSASADG) is disordered. Residues 170–386 (SLNRRYTFDT…GALIRVTAFA (217 aa)) form a domain III, AAA+ region region. The ATP site is built by G214, G216, K217, and T218. The domain IV, binds dsDNA stretch occupies residues 387 to 510 (SLNKTPIDKA…TTRIRQRSKR (124 aa)).

It belongs to the DnaA family. Oligomerizes as a right-handed, spiral filament on DNA at oriC.

Its subcellular location is the cytoplasm. Plays an essential role in the initiation and regulation of chromosomal replication. ATP-DnaA binds to the origin of replication (oriC) to initiate formation of the DNA replication initiation complex once per cell cycle. Binds the DnaA box (a 9 base pair repeat at the origin) and separates the double-stranded (ds)DNA. Forms a right-handed helical filament on oriC DNA; dsDNA binds to the exterior of the filament while single-stranded (ss)DNA is stabiized in the filament's interior. The ATP-DnaA-oriC complex binds and stabilizes one strand of the AT-rich DNA unwinding element (DUE), permitting loading of DNA polymerase. After initiation quickly degrades to an ADP-DnaA complex that is not apt for DNA replication. Binds acidic phospholipids. This chain is Chromosomal replication initiator protein DnaA, found in Mycobacterium ulcerans (strain Agy99).